The primary structure comprises 563 residues: MGSQNRPPPPRKRQPPPPEDHLVTYKRRRSKETQPLPLMANGANSKKDAKAQHWISWRDTLHGFLQSPAISQGGGIQTCIRHALQHNPCLLTNGVVVHTEFKGNPAHSQGEEAKVQHPNGAAGGKVVSADAAIQDAAAAASSEANKAMCNNALFDILVSQKFALLCHLLLGTFHVNKPGDVIDLEKIDAKMRNGDYAHNPALFDDDIQQMWEKFEQVGQEMTGLASNLSTISRVSYQKQASGFSEAEVAEHRIEEISLPGAVHVVTKESTTTVQLAPCDSSHSTIPKRTVPPGRDLCPCDGCGTKVDVEEGLICDECDTMYHFACVKLLNPDIKQVPAIWHCSTCSFKKKELAADTTNNVAHDCLHGGNCVLCDQLELVKTEEEDPKLPIKIELAEEREGSSVSSMGEDNEPDLSTTALSNLCKHCGTCEDDDKRFMVCGHPYCVYKFYHIRCLKTSQLAIEQQKKLGCWYCPSCLCRGCFQDKDDDQIVMCDGCDEGYHIYCMRPARNTIPKGKWYCTFCKIRRAAEGMHKYEDSVLKIHGNSKHACNVNQSKDSEGDGTEK.

The disordered stretch occupies residues Met-1–Lys-46. 3 PHD-type zinc fingers span residues Leu-296–Lys-348, Ser-420–Cys-472, and Ser-474–Arg-524.

As to quaternary structure, interacts with TRX1. As to expression, expressed in shoot apical meristem and leaves.

It localises to the nucleus. Functionally, probable transcription factor involved in the regulation of floral induction under long day (LD) conditions. Promotes photoperiodic flowering by repressing GHD7, a major floral repressor. Seems to function independently of HD1. The sequence is that of PHD finger protein EHD3 from Oryza sativa subsp. japonica (Rice).